The primary structure comprises 248 residues: Putative amino-acid ABC transporter-binding protein PatH (248 aa).

The N-terminal stretch at M1–A21 is a signal peptide.

It belongs to the bacterial solute-binding protein 3 family.

The protein localises to the periplasm. Probably part of a binding-protein-dependent transport system for an amino acid. In Vibrio harveyi (Beneckea harveyi), this protein is Putative amino-acid ABC transporter-binding protein PatH (patH).